The primary structure comprises 231 residues: MKILAIKLLDYREWTERLGYDREWLIQKIQNKFMMKIHEIASQYNTFPLQLRFDNFLMIADGITTTQLAYMINDMQENLPVRIKSCLGYGKTPLEAQWNASICLNNQDDNEIKEYTDEKIAALHFDINFNTETLKYTSVYDSFIEITNIYVNLSRFLYKIGGILQYLGGDNYLGFISTESVNKVIEEFSDDNKIKVGIGIGKNARTAIRLATTSLEKIRNNREKTWHMEEE.

It belongs to the archaeal-type GTP cyclohydrolase family.

The catalysed reaction is GTP + 3 H2O = 2-amino-5-formylamino-6-(5-phospho-D-ribosylamino)pyrimidin-4(3H)-one + 2 phosphate + 2 H(+). Catalyzes the formation of 2-amino-5-formylamino-6-ribofuranosylamino-4(3H)-pyrimidinone ribonucleotide monophosphate and inorganic phosphate from GTP. Also has an independent pyrophosphate phosphohydrolase activity. This is GTP cyclohydrolase III from Saccharolobus solfataricus (strain ATCC 35092 / DSM 1617 / JCM 11322 / P2) (Sulfolobus solfataricus).